The chain runs to 271 residues: Solute carrier family 66 member 2 (271 aa).

3 helical membrane-spanning segments follow: residues 7–27 (GWLLVPLHQLVSWVAAGAMVF), 49–69 (FSTHVCLVLLVANILRILFWF), and 72–92 (HFESPLLWQSIVMILTMLLML). A PQ-loop 1 domain is found at 14 to 80 (HQLVSWVAAG…RHFESPLLWQ (67 aa)). A Phosphoserine modification is found at Ser-110. 3 helical membrane passes run 145 to 165 (DYVQCVLAFTGVAGYITYLSI), 168 to 188 (ALFVETLGFLAVLTEAMLGVP), and 232 to 252 (VCGLLQVMVDLVILGQAYAFA). The region spanning 178–233 (AVLTEAMLGVPQLYRNYCHRSTEGMSLKMVLMWTSGDTFKTAYFLLNGAPLQFSVC) is the PQ-loop 2 domain.

It is found in the membrane. The polypeptide is Solute carrier family 66 member 2 (Slc66a2) (Mus musculus (Mouse)).